Here is a 121-residue protein sequence, read N- to C-terminus: Large ribosomal subunit protein bL20 (121 aa).

This sequence belongs to the bacterial ribosomal protein bL20 family.

Binds directly to 23S ribosomal RNA and is necessary for the in vitro assembly process of the 50S ribosomal subunit. It is not involved in the protein synthesizing functions of that subunit. This chain is Large ribosomal subunit protein bL20, found in Dinoroseobacter shibae (strain DSM 16493 / NCIMB 14021 / DFL 12).